Here is a 485-residue protein sequence, read N- to C-terminus: Glutamyl-tRNA(Gln) amidotransferase subunit A (485 aa).

Residues K78 and S153 each act as charge relay system in the active site. S177 (acyl-ester intermediate) is an active-site residue.

The protein belongs to the amidase family. GatA subfamily. Heterotrimer of A, B and C subunits.

The enzyme catalyses L-glutamyl-tRNA(Gln) + L-glutamine + ATP + H2O = L-glutaminyl-tRNA(Gln) + L-glutamate + ADP + phosphate + H(+). Its function is as follows. Allows the formation of correctly charged Gln-tRNA(Gln) through the transamidation of misacylated Glu-tRNA(Gln) in organisms which lack glutaminyl-tRNA synthetase. The reaction takes place in the presence of glutamine and ATP through an activated gamma-phospho-Glu-tRNA(Gln). The sequence is that of Glutamyl-tRNA(Gln) amidotransferase subunit A from Lawsonia intracellularis (strain PHE/MN1-00).